An 81-amino-acid chain; its full sequence is Putative truncated GMC-type inactive oxidoreductase R833 (81 aa).

Belongs to the GMC oxidoreductase family.

The polypeptide is Putative truncated GMC-type inactive oxidoreductase R833 (Acanthamoeba polyphaga mimivirus (APMV)).